Reading from the N-terminus, the 276-residue chain is Ribosomal RNA small subunit methyltransferase J (276 aa).

S-adenosyl-L-methionine is bound by residues 135-136 (ER) and Asp191.

This sequence belongs to the methyltransferase superfamily. RsmJ family.

It localises to the cytoplasm. The catalysed reaction is guanosine(1516) in 16S rRNA + S-adenosyl-L-methionine = N(2)-methylguanosine(1516) in 16S rRNA + S-adenosyl-L-homocysteine + H(+). Functionally, specifically methylates the guanosine in position 1516 of 16S rRNA. This is Ribosomal RNA small subunit methyltransferase J from Hydrogenovibrio crunogenus (strain DSM 25203 / XCL-2) (Thiomicrospira crunogena).